A 320-amino-acid chain; its full sequence is Homeobox-leucine zipper protein HOX25 (320 aa).

Positions 79–139 (AAARKRRLTA…NRRARWKTKQ (61 aa)) form a DNA-binding region, homeobox. The interval 138–182 (KQLELDFDRLRAAHDELLAGRTALAADNESLRSQVILLTEKLQAN) is leucine-zipper. 2 disordered regions span residues 181 to 209 (ANGK…KSFQ) and 249 to 282 (DSPE…PSSS). Positions 265-278 (SEDDCGGAGSDDDY) are enriched in acidic residues.

This sequence belongs to the HD-ZIP homeobox family. Class I subfamily. Expressed in roots, leaf sheaths and blades and panicles.

The protein resides in the nucleus. Its function is as follows. Probable transcription factor. The polypeptide is Homeobox-leucine zipper protein HOX25 (HOX25) (Oryza sativa subsp. japonica (Rice)).